Here is a 216-residue protein sequence, read N- to C-terminus: ADP-ribosylation factor D (216 aa).

Over residues 188 to 204 the composition is skewed to low complexity; that stretch reads SKFSFSNKSKQQKSNSQ. A disordered region spans residues 188 to 216; it reads SKFSFSNKSKQQKSNSQPNTPRKNIQMMT. The span at 205 to 216 shows a compositional bias: polar residues; that stretch reads PNTPRKNIQMMT.

Belongs to the small GTPase superfamily. Arf family.

The protein localises to the golgi apparatus. GTP-binding protein involved in protein trafficking; may modulate vesicle budding and uncoating within the Golgi apparatus. The polypeptide is ADP-ribosylation factor D (arrD) (Dictyostelium discoideum (Social amoeba)).